The following is a 468-amino-acid chain: Probable acid phosphatase DIA3 (468 aa).

The signal sequence occupies residues 1–20; the sequence is MVKPVIFAICLGVLLSKALS. The Nucleophile role is filled by His-76. Asn-98, Asn-163, Asn-193, Asn-202, Asn-238, Asn-251, and Asn-316 each carry an N-linked (GlcNAc...) asparagine glycan. The active-site Proton donor is the Asp-339. N-linked (GlcNAc...) asparagine glycans are attached at residues Asn-357, Asn-391, Asn-457, and Asn-462.

Belongs to the histidine acid phosphatase family.

The enzyme catalyses a phosphate monoester + H2O = an alcohol + phosphate. This chain is Probable acid phosphatase DIA3 (DIA3), found in Saccharomyces cerevisiae (strain ATCC 204508 / S288c) (Baker's yeast).